Reading from the N-terminus, the 287-residue chain is MQIVDFLIALLPALFWGSVVIINVFVGGGPYNQIRGTTLGTLFIGFSLLATGHAAFDNLTVIIVGLVSGALWAFGQGNQLKSVHLIGVSKTMPISTGMQLVGTTLFSAIFLGEWSTIVQVVMGLIAMILLVVGISLTSLKAKSEGKSDNPEFKKAMGILLLSTIGYVGYVVLGDIFGVSGTDALFFQSIGMAIGGLILSMNHNTSIKSTALNLIPGVIWGIGNLFMFYSQPKVGVATSFSLSQLLVIVSTLGGIFILGEKKDRRQMIGIWSGIIVIVIASIILGNLK.

Helical transmembrane passes span 7–29 (LIAL…VGGG), 34–56 (IRGT…HAAF), 58–75 (NLTV…WAFG), 114–136 (WSTI…GISL), 156–178 (MGIL…IFGV), 183–202 (ALFF…SMNH), 209–228 (TALN…FMFY), 233–255 (VGVA…GGIF), and 267–286 (IGIW…LGNL).

The protein belongs to the GRP transporter (TC 2.A.7.5) family.

Its subcellular location is the cell membrane. Functionally, involved in the uptake of glucose. The chain is Probable glucose uptake protein GlcU (glcU) from Staphylococcus epidermidis (strain ATCC 35984 / DSM 28319 / BCRC 17069 / CCUG 31568 / BM 3577 / RP62A).